Consider the following 368-residue polypeptide: 2-aminoethylphosphonate--pyruvate transaminase (368 aa).

N6-(pyridoxal phosphate)lysine is present on K192.

Belongs to the class-V pyridoxal-phosphate-dependent aminotransferase family. PhnW subfamily. In terms of assembly, homodimer. The cofactor is pyridoxal 5'-phosphate.

The catalysed reaction is (2-aminoethyl)phosphonate + pyruvate = phosphonoacetaldehyde + L-alanine. Its function is as follows. Involved in phosphonate degradation. This Pseudomonas putida (strain W619) protein is 2-aminoethylphosphonate--pyruvate transaminase.